The primary structure comprises 101 residues: MAVVSAPAKPGTTWQRESAPVDVTDRAWVTIVWDDPVNLMSYVTYVFQKLFGYSEPHATKLMLQVHNEGKAVVSAGSRESMEVDVSKLHAAGLWATMQQDR.

The protein belongs to the ClpS family. As to quaternary structure, binds to the N-terminal domain of the chaperone ClpA.

Functionally, involved in the modulation of the specificity of the ClpAP-mediated ATP-dependent protein degradation. The protein is ATP-dependent Clp protease adapter protein ClpS of Mycobacterium bovis (strain ATCC BAA-935 / AF2122/97).